The chain runs to 738 residues: Catalase-peroxidase (738 aa).

The span at 1–13 (MDGQDIGAGGGCP) shows a compositional bias: gly residues. The disordered stretch occupies residues 1-26 (MDGQDIGAGGGCPFSGANTNKGRRSN). Positions 98–226 (WHSAGTYRTA…LAAVQMGLIY (129 aa)) form a cross-link, tryptophyl-tyrosyl-methioninium (Trp-Tyr) (with M-252). Histidine 99 serves as the catalytic Proton acceptor. The segment at residues 226-252 (YVNPEGPDGNPDPIASGRDIRETFARM) is a cross-link (tryptophyl-tyrosyl-methioninium (Tyr-Met) (with W-98)). Histidine 267 serves as a coordination point for heme b.

It belongs to the peroxidase family. Peroxidase/catalase subfamily. Homodimer or homotetramer. It depends on heme b as a cofactor. Post-translationally, formation of the three residue Trp-Tyr-Met cross-link is important for the catalase, but not the peroxidase activity of the enzyme.

The catalysed reaction is H2O2 + AH2 = A + 2 H2O. It catalyses the reaction 2 H2O2 = O2 + 2 H2O. Functionally, bifunctional enzyme with both catalase and broad-spectrum peroxidase activity. The chain is Catalase-peroxidase from Ruegeria sp. (strain TM1040) (Silicibacter sp.).